A 204-amino-acid chain; its full sequence is Large ribosomal subunit protein eL15 (204 aa).

Belongs to the eukaryotic ribosomal protein eL15 family. In terms of assembly, component of the large ribosomal subunit.

Its subcellular location is the cytoplasm. Component of the large ribosomal subunit. The ribosome is a large ribonucleoprotein complex responsible for the synthesis of proteins in the cell. This chain is Large ribosomal subunit protein eL15 (rpl15), found in Cyprinus carpio (Common carp).